The sequence spans 218 residues: MDKSESTSAGRNRRRRPRRGSRSAPSSADANFRVLSQQLSRLNKTLAAGRPTINHPTFVGSERCKPGYTFTSITLKPPKIDRGSYYGKRLLLPDSVTEFDKKLVSRIQIRVNPLPKFDSTVWVTVRKVSASSDLSVAAISAMFADGASPVLVYQYAASGVQANNKLLYDLSAMRADIGDMRKYAVLVYSKDDALETDELVLHVDIEHQRIPTSGVLPV.

Met-1 carries the N-acetylmethionine; by host modification. Positions 1-28 (MDKSESTSAGRNRRRRPRRGSRSAPSSA) are disordered. Residues 11–21 (RNRRRRPRRGS) are compositionally biased toward basic residues.

This sequence belongs to the cucumovirus capsid protein family.

It localises to the virion. Its function is as follows. Capsid protein. Probably binds RNA and plays a role in packaging. This chain is Capsid protein, found in Cucumis sativus (Cucumber).